The following is a 100-amino-acid chain: NADH-quinone oxidoreductase subunit K 1 (100 aa).

Transmembrane regions (helical) follow at residues 4 to 24, 29 to 49, and 60 to 80; these read LNNY…GVLV, IVIF…FIAF, and IFVF…LALM.

It belongs to the complex I subunit 4L family. NDH-1 is composed of 14 different subunits. Subunits NuoA, H, J, K, L, M, N constitute the membrane sector of the complex.

It is found in the cell inner membrane. It carries out the reaction a quinone + NADH + 5 H(+)(in) = a quinol + NAD(+) + 4 H(+)(out). In terms of biological role, NDH-1 shuttles electrons from NADH, via FMN and iron-sulfur (Fe-S) centers, to quinones in the respiratory chain. The immediate electron acceptor for the enzyme in this species is believed to be ubiquinone. Couples the redox reaction to proton translocation (for every two electrons transferred, four hydrogen ions are translocated across the cytoplasmic membrane), and thus conserves the redox energy in a proton gradient. The protein is NADH-quinone oxidoreductase subunit K 1 of Geotalea daltonii (strain DSM 22248 / JCM 15807 / FRC-32) (Geobacter daltonii).